The primary structure comprises 361 residues: 5-formaminoimidazole-4-carboxamide-1-(beta)-D-ribofuranosyl 5'-monophosphate synthetase (361 aa).

Positions 27 and 94 each coordinate 5-amino-1-(5-phospho-beta-D-ribosyl)imidazole-4-carboxamide. The region spanning 116-348 (RAILRWEAER…MGQRIAKEIK (233 aa)) is the ATP-grasp domain. ATP is bound by residues 146–208 (PDEI…ANYC) and E230. N258 provides a ligand contact to 5-amino-1-(5-phospho-beta-D-ribosyl)imidazole-4-carboxamide. Mg(2+) is bound by residues Q297 and E310.

It belongs to the phosphohexose mutase family. Mg(2+) is required as a cofactor. It depends on Mn(2+) as a cofactor.

The catalysed reaction is 5-amino-1-(5-phospho-beta-D-ribosyl)imidazole-4-carboxamide + formate + ATP = 5-formamido-1-(5-phospho-D-ribosyl)imidazole-4-carboxamide + ADP + phosphate. It functions in the pathway purine metabolism; IMP biosynthesis via de novo pathway; 5-formamido-1-(5-phospho-D-ribosyl)imidazole-4-carboxamide from 5-amino-1-(5-phospho-D-ribosyl)imidazole-4-carboxamide (formate route): step 1/1. In terms of biological role, catalyzes the ATP- and formate-dependent formylation of 5-aminoimidazole-4-carboxamide-1-beta-d-ribofuranosyl 5'-monophosphate (AICAR) to 5-formaminoimidazole-4-carboxamide-1-beta-d-ribofuranosyl 5'-monophosphate (FAICAR) in the absence of folates. The protein is 5-formaminoimidazole-4-carboxamide-1-(beta)-D-ribofuranosyl 5'-monophosphate synthetase of Methanococcus vannielii (strain ATCC 35089 / DSM 1224 / JCM 13029 / OCM 148 / SB).